The following is a 119-amino-acid chain: Beta-2-microglobulin (119 aa).

The N-terminal stretch at 1 to 20 is a signal peptide; sequence MSRSVALAVLALLSLSGLEA. The 90-residue stretch at 25-114 folds into the Ig-like C1-type domain; the sequence is PKIQVYSRHP…VTLSGPRTVK (90 aa). Cysteines 45 and 100 form a disulfide.

Belongs to the beta-2-microglobulin family. In terms of assembly, heterodimer of an alpha chain and a beta chain. Beta-2-microglobulin is the beta-chain of major histocompatibility complex class I molecules.

It localises to the secreted. Component of the class I major histocompatibility complex (MHC). Involved in the presentation of peptide antigens to the immune system. This is Beta-2-microglobulin (B2M) from Papio anubis (Olive baboon).